The following is a 132-amino-acid chain: Pro-MCH 1 (132 aa).

Residues 1 to 24 (MRDSVLSVIFALALFLECYTPSMA) form the signal peptide. Residues cysteine 120 and cysteine 129 are joined by a disulfide bond.

Belongs to the MCH family. In terms of tissue distribution, pituitary gland. Produced in neurons of lateral basal hypothalamus which project both to the brain and to the neural lobe of the pituitary gland from where MCH is released.

Functionally, plays a role in skin pigmentation by antagonizing the action of melanotropin alpha. Induces melanin concentration within the melanophores. May participate in the control of the hypothalamo-pituitary adrenal gland axis by inhibiting the release of ACTH. The polypeptide is Pro-MCH 1 (mch1) (Oncorhynchus kisutch (Coho salmon)).